We begin with the raw amino-acid sequence, 613 residues long: Dihydroxy-acid dehydratase (613 aa).

Asp81 contacts Mg(2+). Residue Cys122 participates in [2Fe-2S] cluster binding. Mg(2+)-binding residues include Asp123 and Lys124. At Lys124 the chain carries N6-carboxylysine. Cys197 lines the [2Fe-2S] cluster pocket. Glu493 serves as a coordination point for Mg(2+). Ser519 acts as the Proton acceptor in catalysis.

Belongs to the IlvD/Edd family. In terms of assembly, homodimer. The cofactor is [2Fe-2S] cluster. Requires Mg(2+) as cofactor.

The catalysed reaction is (2R)-2,3-dihydroxy-3-methylbutanoate = 3-methyl-2-oxobutanoate + H2O. The enzyme catalyses (2R,3R)-2,3-dihydroxy-3-methylpentanoate = (S)-3-methyl-2-oxopentanoate + H2O. The protein operates within amino-acid biosynthesis; L-isoleucine biosynthesis; L-isoleucine from 2-oxobutanoate: step 3/4. It participates in amino-acid biosynthesis; L-valine biosynthesis; L-valine from pyruvate: step 3/4. In terms of biological role, functions in the biosynthesis of branched-chain amino acids. Catalyzes the dehydration of (2R,3R)-2,3-dihydroxy-3-methylpentanoate (2,3-dihydroxy-3-methylvalerate) into 2-oxo-3-methylpentanoate (2-oxo-3-methylvalerate) and of (2R)-2,3-dihydroxy-3-methylbutanoate (2,3-dihydroxyisovalerate) into 2-oxo-3-methylbutanoate (2-oxoisovalerate), the penultimate precursor to L-isoleucine and L-valine, respectively. The protein is Dihydroxy-acid dehydratase of Corynebacterium glutamicum (strain R).